The chain runs to 364 residues: Anthranilate phosphoribosyltransferase (364 aa).

5-phospho-alpha-D-ribose 1-diphosphate is bound by residues G101, 104–105 (GD), T109, 111–114 (NLST), 129–137 (KHGNRAASS), and G141. G101 provides a ligand contact to anthranilate. S113 serves as a coordination point for Mg(2+). Residue N132 coordinates anthranilate. An anthranilate-binding site is contributed by R187. The Mg(2+) site is built by D245 and E246.

It belongs to the anthranilate phosphoribosyltransferase family. Homodimer. Mg(2+) is required as a cofactor.

It carries out the reaction N-(5-phospho-beta-D-ribosyl)anthranilate + diphosphate = 5-phospho-alpha-D-ribose 1-diphosphate + anthranilate. It participates in amino-acid biosynthesis; L-tryptophan biosynthesis; L-tryptophan from chorismate: step 2/5. Catalyzes the transfer of the phosphoribosyl group of 5-phosphorylribose-1-pyrophosphate (PRPP) to anthranilate to yield N-(5'-phosphoribosyl)-anthranilate (PRA). This chain is Anthranilate phosphoribosyltransferase, found in Mycolicibacterium vanbaalenii (strain DSM 7251 / JCM 13017 / BCRC 16820 / KCTC 9966 / NRRL B-24157 / PYR-1) (Mycobacterium vanbaalenii).